A 372-amino-acid chain; its full sequence is Cytochrome b (372 aa).

4 helical membrane passes run 25–45 (FGSM…FLAI), 69–90 (WIIQ…YTHI), 105–125 (WLSG…GYVL), and 170–190 (FFAL…IHII). Heme b contacts are provided by H75 and H89. Heme b is bound by residues H174 and H188. H193 contributes to the a ubiquinone binding site. The next 4 helical transmembrane spans lie at 218 to 238 (YKDT…MSFM), 280 to 300 (LGGT…PFTH), 312 to 332 (LTQI…WSAT), and 339 to 358 (FIFI…IINP).

This sequence belongs to the cytochrome b family. As to quaternary structure, the cytochrome bc1 complex contains 3 respiratory subunits (MT-CYB, CYC1 and UQCRFS1), 2 core proteins (UQCRC1 and UQCRC2) and probably 6 low-molecular weight proteins. Requires heme b as cofactor.

Its subcellular location is the mitochondrion inner membrane. Component of the ubiquinol-cytochrome c reductase complex (complex III or cytochrome b-c1 complex) that is part of the mitochondrial respiratory chain. The b-c1 complex mediates electron transfer from ubiquinol to cytochrome c. Contributes to the generation of a proton gradient across the mitochondrial membrane that is then used for ATP synthesis. This Hydrophis semperi (Lake Taal snake) protein is Cytochrome b (MT-CYB).